The chain runs to 462 residues: MSAGWFRRRFLPGGPLPEPRPAGPRSSPVPYHRPRFLRGSGSSPGATDASRRPDARPVRSPARGRTLPWNAGYAEVINAEKSEFNEDQAACGKLCIRRCEFGIEEDQEWLTVCPEEFLTGHYWALFDGHGGPAAAILAANTLHSCLRRQLEAVVEGMIAPQPPMHLSGRCVCPSDPQFVEEKGIQAEDLVIGALENAFQECDDVIGRELEASGQVGGCTALVAVFLQGKLYVANAGDSRAILVRRHEIRQLSSEFTPETERQRIQQLAFTYPELLAGEFTRLEFPRRLKGDDLGQKVLFRDHHMRGWSYKRVEKSDLKYPLIHGQGRQARLLGTLAVSRGLGDHQLRVLDTDIQLKPFLLSIPQVTVLDVHQLAVQEEDVVVMATDGLWDVLSNEQVALLVRSFLTGNQKDDPHRFSELAKMLIHNTQGKDNGATGEGQVSYDDVSVFVIPLHSQAQEGSGH.

Positions 1 to 10 (MSAGWFRRRF) are enriched in basic residues. A disordered region spans residues 1–66 (MSAGWFRRRF…PVRSPARGRT (66 aa)). A PPM-type phosphatase domain is found at 100–452 (EFGIEEDQEW…DDVSVFVIPL (353 aa)). Mn(2+)-binding residues include Asp-127 and Gly-128.

The protein belongs to the PP2C family. It depends on Mg(2+) as a cofactor. Requires Mn(2+) as cofactor. Widely expressed with highest levels in testis and lower levels in lung, kidney and brain.

Its subcellular location is the nucleus. The enzyme catalyses O-phospho-L-seryl-[protein] + H2O = L-seryl-[protein] + phosphate. The catalysed reaction is O-phospho-L-threonyl-[protein] + H2O = L-threonyl-[protein] + phosphate. The chain is Protein phosphatase 1M from Mus musculus (Mouse).